The chain runs to 624 residues: Interleukin-1 receptor-associated kinase-like 2 (624 aa).

The Death domain maps to 13-94 (LDDLCRNIDT…RAAQIVLSWK (82 aa)). The Protein kinase domain maps to 210 to 475 (FDQSHRISEG…LPEACAETWA (266 aa)). Residues 216–224 (ISEGTFADI), Lys237, and 337–340 (KSAN) contribute to the ATP site. Disordered regions lie at residues 508–536 (SLPW…NSSL) and 549–593 (RVSS…ETSW). Polar residues predominate over residues 558–577 (GNGTAQPSTSGRQEADSSSE).

Belongs to the protein kinase superfamily. TKL Ser/Thr protein kinase family. Pelle subfamily. Interacts with MYD88. IL-1 stimulation leads to the formation of a signaling complex which dissociates from the IL-1 receptor following the binding of PELI1.

Its function is as follows. Binds to the IL-1 type I receptor following IL-1 engagement, triggering intracellular signaling cascades leading to transcriptional up-regulation and mRNA stabilization. This Rattus norvegicus (Rat) protein is Interleukin-1 receptor-associated kinase-like 2 (Irak2).